The sequence spans 303 residues: Olfactory receptor 4X2 (303 aa).

Residues 1 to 17 (MTEFIFLVLSPNQEVQR) are Extracellular-facing. Residues 18 to 41 (VCFVIFLFLYTAIVLGNFLIVLTV) form a helical membrane-spanning segment. Over 42–49 (MTSRSLGS) the chain is Cytoplasmic. A helical membrane pass occupies residues 50–71 (PMYFFLSYLSFMEICYSSATAP). The Extracellular segment spans residues 72-92 (KLISDLLAERKVISWWGCMAQ). Residues cysteine 89 and cysteine 181 are joined by a disulfide bond. The chain crosses the membrane as a helical span at residues 93-112 (LFFLHFFGGTEIFLLTVMAY). At 113-131 (DHYVAICKPLSYTTIMNWQ) the chain is on the cytoplasmic side. Residues 132–150 (VCTVLVGIAWVGGFMHSFA) form a helical membrane-spanning segment. At 151-187 (QILLIFHLLFCGPNVINHYFCDLVPLLKLACSDTFLI) the chain is on the extracellular side. A helical membrane pass occupies residues 188-211 (GLLIVANGGTLSVISFGVLLASYM). Topologically, residues 212–227 (VILLHLRTWSSEGWCK) are cytoplasmic. Residues 228–250 (ALSTCGSHFAVVILFFGPCVFNS) traverse the membrane as a helical segment. Topologically, residues 251-261 (LRPSTTLPIDK) are extracellular. The chain crosses the membrane as a helical span at residues 262–281 (MVAVFYTVITAILNPVIYSL). Over 282–303 (RNAEMRKAMKRLWIRTLRLNEK) the chain is Cytoplasmic.

It belongs to the G-protein coupled receptor 1 family.

Its subcellular location is the cell membrane. Functionally, odorant receptor. The chain is Olfactory receptor 4X2 (OR4X2) from Homo sapiens (Human).